The following is a 226-amino-acid chain: Transmembrane emp24 domain-containing protein 5 (226 aa).

The signal sequence occupies residues 1-24 (MGDKTWLPFPVVLLAALLLPRAAG). Residues 25 to 193 (FTPSLDSDFT…IQESNFDRVN (169 aa)) are Lumenal-facing. Positions 42-123 (KECFYQPMPL…EKVIFFELIL (82 aa)) constitute a GOLD domain. Residues 194-214 (FWSMVNLVVMVVVSAIQVYML) form a helical membrane-spanning segment. The Cytoplasmic portion of the chain corresponds to 215 to 226 (KSLFEDKRKSRT). A Mediates export from ER motif is present at residues 217–218 (LF).

Belongs to the EMP24/GP25L family. Interacts with TMED9 and TMED10.

It localises to the endoplasmic reticulum membrane. It is found in the golgi apparatus. The protein localises to the cis-Golgi network membrane. The protein resides in the endoplasmic reticulum-Golgi intermediate compartment membrane. In terms of biological role, potential role in vesicular protein trafficking, mainly in the early secretory pathway. Required for the maintenance of the Golgi apparatus; involved in protein exchange between Golgi stacks during assembly. Probably not required for COPI-vesicle-mediated retrograde transport. In Bos taurus (Bovine), this protein is Transmembrane emp24 domain-containing protein 5 (TMED5).